The sequence spans 92 residues: MKTQVLVVLVLCVVFCLAESRNSMTSEERGLVSLMRQRDDIAKRLQCKCKGDAPDLSHMSGTIYFSCEGGDNSWKKCNSISVFADCCHKKPT.

A signal peptide spans 1–20; it reads MKTQVLVVLVLCVVFCLAES. Positions 21 to 42 are excised as a propeptide; the sequence is RNSMTSEERGLVSLMRQRDDIA. Disulfide bonds link Cys47-Cys86, Cys49-Cys77, and Cys67-Cys87.

Belongs to the sea anemone sodium channel inhibitory toxin family. In terms of tissue distribution, expressed both outside and in acontia, a specialised envenomation structure laden with batteries of venom-containing nematocysts found only in the superfamily Metridioidea.

The protein resides in the secreted. Its subcellular location is the nematocyst. In neuromuscular preparation of crustaceans, the toxin increased neurotransmitter release, causing repetitive firing of the axons. May affect sodium channels (Nav). This chain is Calitoxin, found in Calliactis polypus (Hermit crab anemone).